A 456-amino-acid polypeptide reads, in one-letter code: Exodeoxyribonuclease 7 large subunit (456 aa).

The protein belongs to the XseA family. In terms of assembly, heterooligomer composed of large and small subunits.

Its subcellular location is the cytoplasm. It catalyses the reaction Exonucleolytic cleavage in either 5'- to 3'- or 3'- to 5'-direction to yield nucleoside 5'-phosphates.. Its function is as follows. Bidirectionally degrades single-stranded DNA into large acid-insoluble oligonucleotides, which are then degraded further into small acid-soluble oligonucleotides. The sequence is that of Exodeoxyribonuclease 7 large subunit from Erwinia tasmaniensis (strain DSM 17950 / CFBP 7177 / CIP 109463 / NCPPB 4357 / Et1/99).